The primary structure comprises 225 residues: Cytidylate kinase (225 aa).

11 to 19 (GPAGAGKST) serves as a coordination point for ATP.

Belongs to the cytidylate kinase family. Type 1 subfamily.

It is found in the cytoplasm. The catalysed reaction is CMP + ATP = CDP + ADP. It catalyses the reaction dCMP + ATP = dCDP + ADP. This Shouchella clausii (strain KSM-K16) (Alkalihalobacillus clausii) protein is Cytidylate kinase.